We begin with the raw amino-acid sequence, 75 residues long: Small ribosomal subunit protein eS17 (75 aa).

Belongs to the eukaryotic ribosomal protein eS17 family.

This Thermoplasma volcanium (strain ATCC 51530 / DSM 4299 / JCM 9571 / NBRC 15438 / GSS1) protein is Small ribosomal subunit protein eS17.